We begin with the raw amino-acid sequence, 117 residues long: Large ribosomal subunit protein bL20 (117 aa).

This sequence belongs to the bacterial ribosomal protein bL20 family.

Functionally, binds directly to 23S ribosomal RNA and is necessary for the in vitro assembly process of the 50S ribosomal subunit. It is not involved in the protein synthesizing functions of that subunit. The polypeptide is Large ribosomal subunit protein bL20 (Pelobacter propionicus (strain DSM 2379 / NBRC 103807 / OttBd1)).